Here is a 298-residue protein sequence, read N- to C-terminus: Homoserine kinase (298 aa).

83–93 (PVSRGLGSSST) contacts ATP.

This sequence belongs to the GHMP kinase family. Homoserine kinase subfamily.

The protein resides in the cytoplasm. It catalyses the reaction L-homoserine + ATP = O-phospho-L-homoserine + ADP + H(+). It functions in the pathway amino-acid biosynthesis; L-threonine biosynthesis; L-threonine from L-aspartate: step 4/5. Its function is as follows. Catalyzes the ATP-dependent phosphorylation of L-homoserine to L-homoserine phosphate. The sequence is that of Homoserine kinase from Clostridium beijerinckii (strain ATCC 51743 / NCIMB 8052) (Clostridium acetobutylicum).